A 474-amino-acid chain; its full sequence is ATP synthase subunit beta (474 aa).

Position 153–160 (153–160 (GGAGVGKT)) interacts with ATP.

The protein belongs to the ATPase alpha/beta chains family. As to quaternary structure, F-type ATPases have 2 components, CF(1) - the catalytic core - and CF(0) - the membrane proton channel. CF(1) has five subunits: alpha(3), beta(3), gamma(1), delta(1), epsilon(1). CF(0) has three main subunits: a(1), b(2) and c(9-12). The alpha and beta chains form an alternating ring which encloses part of the gamma chain. CF(1) is attached to CF(0) by a central stalk formed by the gamma and epsilon chains, while a peripheral stalk is formed by the delta and b chains.

It is found in the cell inner membrane. The enzyme catalyses ATP + H2O + 4 H(+)(in) = ADP + phosphate + 5 H(+)(out). Functionally, produces ATP from ADP in the presence of a proton gradient across the membrane. The catalytic sites are hosted primarily by the beta subunits. This is ATP synthase subunit beta from Rickettsia typhi (strain ATCC VR-144 / Wilmington).